A 329-amino-acid polypeptide reads, in one-letter code: Malate dehydrogenase (329 aa).

12–18 (GAAGQIG) contacts NAD(+). 2 residues coordinate substrate: Arg-93 and Arg-99. NAD(+) is bound by residues Asn-106, Gln-113, and 130-132 (TGN). Substrate is bound by residues Asn-132 and Arg-163. His-188 functions as the Proton acceptor in the catalytic mechanism.

Belongs to the LDH/MDH superfamily. MDH type 2 family.

It catalyses the reaction (S)-malate + NAD(+) = oxaloacetate + NADH + H(+). Its function is as follows. Catalyzes the reversible oxidation of malate to oxaloacetate. The chain is Malate dehydrogenase from Mycobacterium ulcerans (strain Agy99).